Here is a 284-residue protein sequence, read N- to C-terminus: Heat stress transcription factor B-1 (284 aa).

Residues 12-106 mediate DNA binding; it reads PAPFLSKTYQ…LLTDIRRRKS (95 aa). The segment at 118-151 is disordered; that stretch reads VGSPSESNSGGGDDHGSSSTSSPGSSKNPGSVEN. The segment covering 134-148 has biased composition (low complexity); the sequence is SSSTSSPGSSKNPGS. A hydrophobic repeat HR-A/B region spans residues 147 to 192; that stretch reads GSVENMVADLSGENEKLKRENNNLSSELAAAKKQRDELVTFLTGHL. Positions 247–252 match the Nuclear localization signal motif; the sequence is RKKRDR.

Belongs to the HSF family. Class B subfamily. Homotrimer. In terms of processing, exhibits temperature-dependent phosphorylation.

It is found in the nucleus. Its function is as follows. Transcriptional regulator that specifically binds DNA sequence 5'-AGAAnnTTCT-3' known as heat shock promoter elements (HSE). This Arabidopsis thaliana (Mouse-ear cress) protein is Heat stress transcription factor B-1 (HSFB1).